Here is an 82-residue protein sequence, read N- to C-terminus: Small ribosomal subunit protein bS18 (82 aa).

It belongs to the bacterial ribosomal protein bS18 family. As to quaternary structure, part of the 30S ribosomal subunit. Forms a tight heterodimer with protein bS6.

In terms of biological role, binds as a heterodimer with protein bS6 to the central domain of the 16S rRNA, where it helps stabilize the platform of the 30S subunit. The protein is Small ribosomal subunit protein bS18 of Methylobacterium nodulans (strain LMG 21967 / CNCM I-2342 / ORS 2060).